The sequence spans 307 residues: Aspartate carbamoyltransferase catalytic subunit (307 aa).

Positions 56 and 57 each coordinate carbamoyl phosphate. Residue K84 coordinates L-aspartate. Carbamoyl phosphate-binding residues include R106, H136, and Q139. Residues R169 and R221 each contribute to the L-aspartate site. Residues A262 and P263 each coordinate carbamoyl phosphate.

The protein belongs to the aspartate/ornithine carbamoyltransferase superfamily. ATCase family. As to quaternary structure, heterododecamer (2C3:3R2) of six catalytic PyrB chains organized as two trimers (C3), and six regulatory PyrI chains organized as three dimers (R2).

It carries out the reaction carbamoyl phosphate + L-aspartate = N-carbamoyl-L-aspartate + phosphate + H(+). It functions in the pathway pyrimidine metabolism; UMP biosynthesis via de novo pathway; (S)-dihydroorotate from bicarbonate: step 2/3. In terms of biological role, catalyzes the condensation of carbamoyl phosphate and aspartate to form carbamoyl aspartate and inorganic phosphate, the committed step in the de novo pyrimidine nucleotide biosynthesis pathway. In Streptococcus pneumoniae serotype 2 (strain D39 / NCTC 7466), this protein is Aspartate carbamoyltransferase catalytic subunit.